The following is an 815-amino-acid chain: Polyribonucleotide nucleotidyltransferase (815 aa).

Positions 489 and 495 each coordinate Mg(2+). The 60-residue stretch at 556-615 folds into the KH domain; sequence PRFYTLQIPTDKIRDLIGPGGKVIRGIVEATGVKIDVEDSGKVNVASSDQEAAKKALKMI. The S1 motif domain maps to 625–692; that stretch reads GKTYLGTVTR…DGNRIKLSRK (68 aa). The tract at residues 700-815 is disordered; the sequence is AKMATEGGGD…GGGGGGRGRG (116 aa). A compositionally biased stretch (gly residues) spans 723–734; that stretch reads APGGVTFEGGYE. Residues 735-745 are compositionally biased toward acidic residues; that stretch reads GGDEPEVEEGE. The segment covering 775–815 has biased composition (gly residues); the sequence is PHGGGGGAGRGGRGRRPGGGGGGGRGGHGGRGGGGGGRGRG.

It belongs to the polyribonucleotide nucleotidyltransferase family. Mg(2+) serves as cofactor.

Its subcellular location is the cytoplasm. It catalyses the reaction RNA(n+1) + phosphate = RNA(n) + a ribonucleoside 5'-diphosphate. Its function is as follows. Involved in mRNA degradation. Catalyzes the phosphorolysis of single-stranded polyribonucleotides processively in the 3'- to 5'-direction. This Koribacter versatilis (strain Ellin345) protein is Polyribonucleotide nucleotidyltransferase.